The primary structure comprises 154 residues: IQ domain-containing protein F3 (154 aa).

The IQ domain occupies 89–118 (QEQATVKLQSCIRMWQCRQCYRQMCNALCL).

The sequence is that of IQ domain-containing protein F3 (IQCF3) from Homo sapiens (Human).